The following is a 701-amino-acid chain: Elongation factor G 1 (701 aa).

The tr-type G domain maps to 8–290 (ERYRNIGISA…AVIDYLPSPL (283 aa)). Residues 17–24 (AHIDAGKT), 88–92 (DTPGH), and 142–145 (NKMD) each bind GTP.

This sequence belongs to the TRAFAC class translation factor GTPase superfamily. Classic translation factor GTPase family. EF-G/EF-2 subfamily.

The protein resides in the cytoplasm. In terms of biological role, catalyzes the GTP-dependent ribosomal translocation step during translation elongation. During this step, the ribosome changes from the pre-translocational (PRE) to the post-translocational (POST) state as the newly formed A-site-bound peptidyl-tRNA and P-site-bound deacylated tRNA move to the P and E sites, respectively. Catalyzes the coordinated movement of the two tRNA molecules, the mRNA and conformational changes in the ribosome. The protein is Elongation factor G 1 of Paraburkholderia xenovorans (strain LB400).